A 238-amino-acid polypeptide reads, in one-letter code: Sugar fermentation stimulation protein homolog (238 aa).

This sequence belongs to the SfsA family.

The protein is Sugar fermentation stimulation protein homolog of Haemophilus influenzae (strain 86-028NP).